Reading from the N-terminus, the 459-residue chain is Flavin-containing monooxygenase FMO GS-OX1 (459 aa).

17–22 is a binding site for FAD; sequence GAGAAG. 211-216 provides a ligand contact to NADP(+); it reads GNYASG.

This sequence belongs to the FMO family. FAD serves as cofactor. In terms of tissue distribution, mainly expressed in leaves. Low levels in flowers and seeds.

It carries out the reaction a (Z)-omega-(methylsulfanyl)-N-sulfo-alkylhydroximate S-glucoside + NADPH + O2 + H(+) = a (Z)-omega-(methylsulfinyl)-alkyl-glucosinolate + NADP(+) + H2O. In terms of biological role, catalyzes the conversion of methylthioalkyl glucosinolates into methylsulfinylalkyl glucosinolates. Able to S-oxygenate both desulfo- and intact 4-methylthiobutyl glucosinolates, but no activity with methionine, dihomomethionine or 5-methylthiopentaldoxime. The chain is Flavin-containing monooxygenase FMO GS-OX1 (FMOGS-OX1) from Arabidopsis thaliana (Mouse-ear cress).